Reading from the N-terminus, the 778-residue chain is Hyaluronate lyase (778 aa).

Positions 1 to 33 (MSWNRRSFLGALGVTCLAGAGMVPIVRPRTAAA) form a signal peptide, tat-type signal. Active-site residues include Asn-200, His-250, and Tyr-259.

Belongs to the polysaccharide lyase 8 family. Post-translationally, predicted to be exported by the Tat system. The position of the signal peptide cleavage has not been experimentally proven.

The catalysed reaction is [hyaluronan](n) = n 3-(4-deoxy-beta-D-gluc-4-enuronosyl)-N-acetyl-D-glucosamine + H2O. Its activity is regulated as follows. Is salt-dependent and is active over a wide range of NaCl concentrations. Activity is slightly promoted by Ni(2+), and inhibited by most of the tested metal ions, including Li(+), K(+), Ba(2+), Mg(2+), Zn(2+), Ca(2+), Mn(2+) and Al(3+). In terms of biological role, degrades hyaluronic acid into unsaturated disaccharides as the end products. Exhibits very low activity against various types of chondroitin sulfate variants. The chain is Hyaluronate lyase from Thermasporomyces composti.